We begin with the raw amino-acid sequence, 478 residues long: Lysosome membrane protein 2 (478 aa).

Residues 1-4 (MGRC) are Cytoplasmic-facing. The chain crosses the membrane as a helical span at residues 5–27 (CFYTAGTLSLLLLVTSVTLLVAR). Topologically, residues 28-433 (VFQKAVDQTI…QLKSVINTTL (406 aa)) are lumenal. Asn45, Asn68, Asn105, and Asn122 each carry an N-linked (GlcNAc...) asparagine glycan. The important for interaction with GBA1 stretch occupies residues 155 to 191 (LIEAMLKAYQQKLFVIHTVHELLWGYKDEILSLVHIF). 4 N-linked (GlcNAc...) asparagine glycosylation sites follow: Asn206, Asn224, Asn249, and Asn304. Disulfide bonds link Cys274/Cys329 and Cys312/Cys318. Asn325, Asn412, and Asn430 each carry an N-linked (GlcNAc...) asparagine glycan. The helical transmembrane segment at 434–459 (VVTNIPYIIMALGVFFGLVFTWLACR) threads the bilayer. The Cytoplasmic portion of the chain corresponds to 460–478 (GQGSMDEGTADERAPLIRT).

This sequence belongs to the CD36 family. In terms of assembly, interacts with GBA1. In terms of processing, acylated by palmitic acid group(s). Post-translationally, heavily glycosylated. In terms of tissue distribution, detected in the extracts of brain, heart, lung, liver and kidney.

Its subcellular location is the lysosome membrane. Its function is as follows. Acts as a lysosomal receptor for glucosylceramidase (GBA1) targeting. The polypeptide is Lysosome membrane protein 2 (Scarb2) (Mus musculus (Mouse)).